A 97-amino-acid chain; its full sequence is Co-chaperonin GroES (97 aa).

This sequence belongs to the GroES chaperonin family. Heptamer of 7 subunits arranged in a ring. Interacts with the chaperonin GroEL.

Its subcellular location is the cytoplasm. Functionally, together with the chaperonin GroEL, plays an essential role in assisting protein folding. The GroEL-GroES system forms a nano-cage that allows encapsulation of the non-native substrate proteins and provides a physical environment optimized to promote and accelerate protein folding. GroES binds to the apical surface of the GroEL ring, thereby capping the opening of the GroEL channel. The protein is Co-chaperonin GroES of Sodalis glossinidius (strain morsitans).